An 846-amino-acid chain; its full sequence is Translation initiation factor IF-2 (846 aa).

Positions 198-219 (YKREEEEKKSKAKKAGGKGFKK) are disordered. The segment covering 207 to 219 (SKAKKAGGKGFKK) has biased composition (basic residues). The tr-type G domain occupies 345–512 (SRAPVVTIMG…AVLLQSEVLE (168 aa)). Residues 354-361 (GHVDHGKT) form a G1 region. 354-361 (GHVDHGKT) is a GTP binding site. The G2 stretch occupies residues 379 to 383 (GITQH). Residues 400-403 (DTPG) are G3. GTP is bound by residues 400–404 (DTPGH) and 454–457 (NKID). A G4 region spans residues 454–457 (NKID). The segment at 490–492 (SAK) is G5.

The protein belongs to the TRAFAC class translation factor GTPase superfamily. Classic translation factor GTPase family. IF-2 subfamily.

The protein resides in the cytoplasm. One of the essential components for the initiation of protein synthesis. Protects formylmethionyl-tRNA from spontaneous hydrolysis and promotes its binding to the 30S ribosomal subunits. Also involved in the hydrolysis of GTP during the formation of the 70S ribosomal complex. This chain is Translation initiation factor IF-2, found in Francisella tularensis subsp. novicida (strain U112).